Here is a 318-residue protein sequence, read N- to C-terminus: Galactofuranose-binding protein YtfQ (318 aa).

An N-terminal signal peptide occupies residues 1–21 (MWKRLLIVSAVSAAMSSMALA). Residues 34–38 (ESGWR), 111–112 (DR), R167, N220, and D248 each bind beta-D-galactofuranose. Cysteines 150 and 214 form a disulfide.

The protein belongs to the bacterial solute-binding protein 2 family. The complex is composed of two ATP-binding proteins (YtfR), two transmembrane proteins (YtfT and YjfF) and a solute-binding protein (YtfQ).

The protein resides in the periplasm. Its function is as follows. Part of the ABC transporter complex YtfQRT-YjfF involved in galactofuranose transport. Binds to both alpha- and beta-galactofuranose. This is Galactofuranose-binding protein YtfQ (ytfQ) from Escherichia coli (strain K12).